The chain runs to 359 residues: Methylthioribose-1-phosphate isomerase (359 aa).

Catalysis depends on aspartate 235, which acts as the Proton donor.

Belongs to the eIF-2B alpha/beta/delta subunits family. MtnA subfamily.

It localises to the cytoplasm. The protein resides in the nucleus. It carries out the reaction 5-(methylsulfanyl)-alpha-D-ribose 1-phosphate = 5-(methylsulfanyl)-D-ribulose 1-phosphate. Its pathway is amino-acid biosynthesis; L-methionine biosynthesis via salvage pathway; L-methionine from S-methyl-5-thio-alpha-D-ribose 1-phosphate: step 1/6. Catalyzes the interconversion of methylthioribose-1-phosphate (MTR-1-P) into methylthioribulose-1-phosphate (MTRu-1-P). The chain is Methylthioribose-1-phosphate isomerase (mri1) from Schizosaccharomyces pombe (strain 972 / ATCC 24843) (Fission yeast).